The sequence spans 1381 residues: DNA-directed RNA polymerase subunit beta'' (1381 aa).

Zn(2+)-binding residues include cysteine 224, cysteine 296, cysteine 303, and cysteine 306.

The protein belongs to the RNA polymerase beta' chain family. RpoC2 subfamily. As to quaternary structure, in plastids the minimal PEP RNA polymerase catalytic core is composed of four subunits: alpha, beta, beta', and beta''. When a (nuclear-encoded) sigma factor is associated with the core the holoenzyme is formed, which can initiate transcription. The cofactor is Zn(2+).

The protein resides in the plastid. Its subcellular location is the chloroplast. The enzyme catalyses RNA(n) + a ribonucleoside 5'-triphosphate = RNA(n+1) + diphosphate. Functionally, DNA-dependent RNA polymerase catalyzes the transcription of DNA into RNA using the four ribonucleoside triphosphates as substrates. This is DNA-directed RNA polymerase subunit beta'' from Drimys granadensis.